The primary structure comprises 257 residues: uncharacterized protein (257 aa).

The N-terminal stretch at Met1–Ala26 is a signal peptide. Positions Ala80 to Ala135 are disordered. Residues Glu121–Ser134 show a composition bias toward polar residues. Residues Val141–Phe254 enclose the SCP domain.

This is an uncharacterized protein from Bacillus subtilis (strain 168).